A 512-amino-acid chain; its full sequence is PTS system mannitol-specific EIICB component (512 aa).

The Cytoplasmic portion of the chain corresponds to 1–28; the sequence is MSQTEEKKGIGRRVQAFGSFLSSMIMPN. Positions 17-349 constitute a PTS EIIC type-2 domain; the sequence is FGSFLSSMIM…MKFTREPKQD (333 aa). A helical transmembrane segment spans residues 29-50; it reads IGAFIAWGFIAAIFIDNGWLPN. The Extracellular segment spans residues 51–54; sequence KDLA. A helical membrane pass occupies residues 55 to 75; the sequence is TLAGPMITYLIPLLIAFSGGR. Residues 76 to 139 are Cytoplasmic-facing; that stretch reads LIYDLRGGII…QGFEMLFNNF (64 aa). A helical membrane pass occupies residues 140–161; it reads SAGILGFIMTIAGFKILAPLMK. The Extracellular portion of the chain corresponds to 162–170; that stretch reads FIMHILSVA. A helical transmembrane segment spans residues 171–191; the sequence is VEALVHAHLLPLVSILVEPAK. At 192–278 the chain is on the cytoplasmic side; it reads IVFLNNAINH…VLMRPLLFIA (87 aa). A helical membrane pass occupies residues 279-298; it reads VILGGMTGVATYQATGFGFK. Residues 299 to 318 lie on the Extracellular side of the membrane; sequence SPASPGSFIVYCLNAPRGEF. Residues 319 to 340 traverse the membrane as a helical segment; it reads LHMLLGVFLAALVSFVVAALIM. The Cytoplasmic segment spans residues 341 to 512; it reads KFTREPKQDL…LNNLKKDDQA (172 aa). The interval 355 to 402 is disordered; the sequence is AQMENTKGKKSSVASKLVSSDKNVNTEENASGNVSETSSSDDDPEALL. Residues 365–376 are compositionally biased toward low complexity; it reads SSVASKLVSSDK. The span at 380–392 shows a compositional bias: polar residues; sequence TEENASGNVSETS. Residues 419-512 form the PTS EIIB type-2 domain; that stretch reads NHVIFACDAG…LNNLKKDDQA (94 aa). Catalysis depends on C425, which acts as the Phosphocysteine intermediate; for EIIB activity. C425 bears the Phosphocysteine; by EIIA mark.

As to quaternary structure, homodimer.

Its subcellular location is the cell membrane. The catalysed reaction is D-mannitol(out) + N(pros)-phospho-L-histidyl-[protein] = D-mannitol 1-phosphate(in) + L-histidyl-[protein]. In terms of biological role, the phosphoenolpyruvate-dependent sugar phosphotransferase system (sugar PTS), a major carbohydrate active transport system, catalyzes the phosphorylation of incoming sugar substrates concomitantly with their translocation across the cell membrane. The enzyme II CmtAB PTS system is involved in D-mannitol transport. The chain is PTS system mannitol-specific EIICB component (mtlA) from Staphylococcus aureus (strain Mu50 / ATCC 700699).